The following is a 310-amino-acid chain: 1-aminocyclopropane-1-carboxylate oxidase 1 (310 aa).

Residues Glu113–Leu133 are a coiled coil. The Fe2OG dioxygenase domain maps to Pro158 to Pro259. Fe cation-binding residues include His182, Asp184, and His240. Arg250 is a binding site for 2-oxoglutarate.

Belongs to the iron/ascorbate-dependent oxidoreductase family. Fe(2+) serves as cofactor.

The catalysed reaction is 1-aminocyclopropane-1-carboxylate + L-ascorbate + O2 = ethene + L-dehydroascorbate + hydrogen cyanide + CO2 + 2 H2O. Its pathway is alkene biosynthesis; ethylene biosynthesis via S-adenosyl-L-methionine; ethylene from S-adenosyl-L-methionine: step 2/2. Enzyme involved in the ethylene biosynthesis. May promote stem elongation by maximizing the extensibility cells, possibly by activating ethylene biosynthesis, in response to very-long-chain fatty acids (VLCFAs C20:0 to C30:0). The sequence is that of 1-aminocyclopropane-1-carboxylate oxidase 1 (ACO1) from Arabidopsis thaliana (Mouse-ear cress).